The chain runs to 1317 residues: Kinesin-like protein KIF16B (1317 aa).

The region spanning Ser3–Ile358 is the Kinesin motor domain. Residue Gly102–Ser109 coordinates ATP. The stretch at Val370–Lys425 forms a coiled coil. Ser398 carries the post-translational modification Phosphoserine. Residues Thr478–Ile529 form the FHA domain. Position 577 is a phosphothreonine (Thr577). Ser582 carries the post-translational modification Phosphoserine. Coiled-coil stretches lie at residues Gly595 to Val882 and Leu936 to Asp1087. Polar residues predominate over residues Leu1036 to Gly1048. Residues Leu1036–Gln1057 are disordered. Ser1052 is modified (phosphoserine). The region spanning Asp1182–Thr1296 is the PX domain.

It belongs to the TRAFAC class myosin-kinesin ATPase superfamily. Kinesin family. In terms of assembly, interacts with RAB14. Interacts with PTPN21. In terms of tissue distribution, primarily expressed in brain. Also present in kidney, liver, intestine, placenta, leukocytes, heart and skeletal muscle (at protein level).

It localises to the cytoplasm. It is found in the cytoskeleton. Its subcellular location is the early endosome membrane. The protein resides in the spindle. Its function is as follows. Plus end-directed microtubule-dependent motor protein involved in endosome transport and receptor recycling and degradation. Regulates the plus end motility of early endosomes and the balance between recycling and degradation of receptors such as EGF receptor (EGFR) and FGF receptor (FGFR). Regulates the Golgi to endosome transport of FGFR-containing vesicles during early development, a key process for developing basement membrane and epiblast and primitive endoderm lineages during early postimplantation development. In Homo sapiens (Human), this protein is Kinesin-like protein KIF16B (KIF16B).